A 318-amino-acid polypeptide reads, in one-letter code: NLP effector protein 7 (318 aa).

Residues 1–19 (MRLFAFLWSSVAFLSTVQA) form the signal peptide. Positions 23–41 (QTASQTQDDSSTPTPTPTD) are enriched in low complexity. 2 disordered regions span residues 23-42 (QTAS…PTDK) and 51-96 (RTKT…TPDP). Over residues 55–65 (PMATPNRTIMP) the composition is skewed to polar residues. The N-linked (GlcNAc...) asparagine glycan is linked to Asn60. The segment covering 73-96 (TEPPTPEPTYLPTPSPTPAPTPDP) has biased composition (pro residues). Residues 185 to 195 (AIMYSWYFPKD) carry the Conserved undecapeptide motif I motif. A Hepta-peptide GHRHDWE motif II motif is present at residues 202–208 (GHRHDWE).

This sequence belongs to the Necrosis inducing protein (NPP1) family.

The protein localises to the secreted. In terms of biological role, secreted effector that contributes moderately to virulence during infection by P.capsici. Does not cause visible reaction of C.annuum for several days after inoculation, but by 7 days after inoculation, small necrotic lesions become visible. Leads only to chlorotic areas, without necrosis at 7 days after non-host N.benthamiana leaves infection. This is NLP effector protein 7 from Phytophthora capsici.